A 676-amino-acid polypeptide reads, in one-letter code: Palmitoyl-CoA ligase FUM16 (676 aa).

Residue 245-256 (IMYTSGSTGLPN) coordinates AMP. The tract at residues 552 to 655 (KLESIYRTSQ…SGLVTPTMKL (104 aa)) is AMP-binding.

This sequence belongs to the ATP-dependent AMP-binding enzyme family.

The protein resides in the endoplasmic reticulum. The protein operates within mycotoxin biosynthesis. Its function is as follows. Palmitoyl-CoA ligase; part of the gene cluster that mediates the biosynthesis of fumonisins B1 (FB1), B2 (FB2), B3 (FB3), and B4 (FB4), which are carcinogenic mycotoxins. Plays a role in the synthesis of ceramide and is involved in self-protection from fumonisin B1 toxicity. The biosynthesis starts with the FUM1-catalyzed carbon chain assembly from one molecule of acetyl-CoA, eight molecules of malonyl-CoA, and two molecules of methionine (in S-adenosyl form). The C18 polyketide chain is released from the enzyme by a nucleophilic attack of a carbanion, which is derived from R-carbon of alanine by decarboxylation, on the carbonyl carbon of polyketide acyl chain. This step is catalyzed by the pyridoxal 5'-phosphate-dependent aminoacyl transferase FUM8. The resultant 3-keto intermediate is then stereospecifically reduced to a 3-hydroxyl product by reductase FUM13. Subsequent oxidations at C-10 by the cytochrome P450 monooxygenase FUM2, C-14 and C-15 by FUM6, FUM12 or FUM15, tricarballylic esterification of the hydroxyl groups on C-14 and C-15 by acyltransferase FUM14, and C-5 hydroxylation by 2-keto-glutarate-dependent dioxygenase FUM3 furnish the biosynthesis of fumonisins. The tricarballylic moieties are most likely derived from the citric acid cycle, and their addition to the carbon backbone may involve FUM7, FUM10, FUM11 and FUM14. The chain is Palmitoyl-CoA ligase FUM16 from Gibberella moniliformis (strain M3125 / FGSC 7600) (Maize ear and stalk rot fungus).